The following is a 372-amino-acid chain: Chaperone protein DnaJ (372 aa).

One can recognise a J domain in the interval 5–69; that stretch reads DYYEVLGLTK…QKKARYDQFG (65 aa). The CR-type zinc finger occupies 129-211; that stretch reads GKETEIEIPK…CRGEGKVQKR (83 aa). Residues Cys-142, Cys-145, Cys-159, Cys-162, Cys-185, Cys-188, Cys-199, and Cys-202 each contribute to the Zn(2+) site. CXXCXGXG motif repeat units lie at residues 142–149, 159–166, 185–192, and 199–206; these read CETCHGSG, CSTCNGAG, CTTCHGTG, and CSTCRGEG.

It belongs to the DnaJ family. Homodimer. Zn(2+) serves as cofactor.

It localises to the cytoplasm. Participates actively in the response to hyperosmotic and heat shock by preventing the aggregation of stress-denatured proteins and by disaggregating proteins, also in an autonomous, DnaK-independent fashion. Unfolded proteins bind initially to DnaJ; upon interaction with the DnaJ-bound protein, DnaK hydrolyzes its bound ATP, resulting in the formation of a stable complex. GrpE releases ADP from DnaK; ATP binding to DnaK triggers the release of the substrate protein, thus completing the reaction cycle. Several rounds of ATP-dependent interactions between DnaJ, DnaK and GrpE are required for fully efficient folding. Also involved, together with DnaK and GrpE, in the DNA replication of plasmids through activation of initiation proteins. In Lysinibacillus sphaericus (strain C3-41), this protein is Chaperone protein DnaJ.